The following is a 521-amino-acid chain: Bifunctional purine biosynthesis protein PurH (521 aa).

Residues Met-1–Thr-149 form the MGS-like domain.

Belongs to the PurH family.

It catalyses the reaction (6R)-10-formyltetrahydrofolate + 5-amino-1-(5-phospho-beta-D-ribosyl)imidazole-4-carboxamide = 5-formamido-1-(5-phospho-D-ribosyl)imidazole-4-carboxamide + (6S)-5,6,7,8-tetrahydrofolate. The enzyme catalyses IMP + H2O = 5-formamido-1-(5-phospho-D-ribosyl)imidazole-4-carboxamide. It functions in the pathway purine metabolism; IMP biosynthesis via de novo pathway; 5-formamido-1-(5-phospho-D-ribosyl)imidazole-4-carboxamide from 5-amino-1-(5-phospho-D-ribosyl)imidazole-4-carboxamide (10-formyl THF route): step 1/1. It participates in purine metabolism; IMP biosynthesis via de novo pathway; IMP from 5-formamido-1-(5-phospho-D-ribosyl)imidazole-4-carboxamide: step 1/1. This Chlorobium phaeobacteroides (strain DSM 266 / SMG 266 / 2430) protein is Bifunctional purine biosynthesis protein PurH.